A 309-amino-acid chain; its full sequence is Porphobilinogen deaminase (309 aa).

S-(dipyrrolylmethanemethyl)cysteine is present on C244.

This sequence belongs to the HMBS family. Monomer. Dipyrromethane is required as a cofactor.

The catalysed reaction is 4 porphobilinogen + H2O = hydroxymethylbilane + 4 NH4(+). Its pathway is porphyrin-containing compound metabolism; protoporphyrin-IX biosynthesis; coproporphyrinogen-III from 5-aminolevulinate: step 2/4. Functionally, tetrapolymerization of the monopyrrole PBG into the hydroxymethylbilane pre-uroporphyrinogen in several discrete steps. This chain is Porphobilinogen deaminase, found in Listeria monocytogenes serotype 4a (strain HCC23).